Reading from the N-terminus, the 718-residue chain is NF-kappa-B inhibitor zeta (718 aa).

A compositionally biased stretch (basic and acidic residues) spans 1–17 (MIVDKLLDDSRGGEGLR). 2 disordered regions span residues 1–20 (MIVDKLLDDSRGGEGLRDAA) and 58–108 (SAPG…RQQR). Residues 58 to 83 (SAPGSPGSDSSDFSSASSVSSCGAVE) show a composition bias toward low complexity. Positions 84–97 (SRSRGGARAERQPV) are enriched in basic and acidic residues. One can recognise an OCA domain in the interval 108–130 (RGPFQGVRVKNSVKELLLHIRSH). The Nuclear localization signal motif lies at 164-179 (KRKGPDSLSDGPACKR). Residues 186–211 (QFLTPPQTPTPGESMEDVHLNEPKQE) form a disordered region. Over residues 201–211 (EDVHLNEPKQE) the composition is skewed to basic and acidic residues. Residues 321–394 (AYEPNLFDGP…MVGHEMASDS (74 aa)) are required for transcriptional activity. The tract at residues 404–718 (MGNPMNTTQL…KSIQQRAPPY (315 aa)) is interaction with NFKB1/p50. ANK repeat units follow at residues 443-472 (DGDTFLHIAVAQGRRALSYVLARKMNALHM), 479-508 (NGQSAFQVAVAANQHLIVQDLVNIGAQVNT), 512-541 (WGRTPLHVCAEKGHSQVLQAIQKGAVGSNQ), 551-580 (DGLTPLHCAVIAHNAVVHELQRNQQPHSPE), 582-607 (QELLLKNKSLVDTIKCLIQMGAAVEA), 612-641 (SGRTALHLAAEEANLELIRLFLELPSCLSF), and 648-681 (NGNTALHVAASLQYRLTQLDAVRLLMRKGADPST).

Interacts with NFKB1/p50. Interacts with RELA. Interacts with AKIRIN2. As to expression, expressed at high levels in peripheral blood leukocytes and lung, at moderate levels in liver, placenta, and at low levels in spleen, kidney, skeletal muscle and heart.

It localises to the nucleus. Involved in regulation of NF-kappa-B transcription factor complexes. Inhibits NF-kappa-B activity without affecting its nuclear translocation upon stimulation. Inhibits DNA-binding of RELA and NFKB1/p50, and of the NF-kappa-B p65-p50 heterodimer and the NF-kappa-B p50-p50 homodimer. Also seems to activate NF-kappa-B-mediated transcription. In vitro, upon association with NFKB1/p50 has transcriptional activation activity and, together with NFKB1/p50 and RELA, is recruited to LCN2 promoters. Promotes transcription of LCN2 and DEFB4. Is recruited to IL-6 promoters and activates IL-6 but decreases TNF-alpha production in response to LPS. Seems to be involved in the induction of inflammatory genes activated through TLR/IL-1 receptor signaling. Involved in the induction of T helper 17 cells (Th17) differentiation upon recognition of antigen by T cell antigen receptor (TCR). This Homo sapiens (Human) protein is NF-kappa-B inhibitor zeta (NFKBIZ).